Reading from the N-terminus, the 217-residue chain is NADH-quinone oxidoreductase subunit I (217 aa).

The tract at residues 22–41 is disordered; it reads TTEQYPEEKKETAPRFHGRH. 4Fe-4S ferredoxin-type domains follow at residues 43 to 73 and 89 to 118; these read LNRH…VEGA and RVYQ…MSND. Residues C53, C56, C59, C63, C98, C101, C104, and C108 each coordinate [4Fe-4S] cluster. The segment at 193-217 is disordered; the sequence is ARRTAGEHSRADEVPAHGAGSERPR.

This sequence belongs to the complex I 23 kDa subunit family. As to quaternary structure, NDH-1 is composed of 14 different subunits. Subunits NuoA, H, J, K, L, M, N constitute the membrane sector of the complex. [4Fe-4S] cluster is required as a cofactor.

It localises to the cell membrane. It carries out the reaction a quinone + NADH + 5 H(+)(in) = a quinol + NAD(+) + 4 H(+)(out). In terms of biological role, NDH-1 shuttles electrons from NADH, via FMN and iron-sulfur (Fe-S) centers, to quinones in the respiratory chain. The immediate electron acceptor for the enzyme in this species is believed to be ubiquinone. Couples the redox reaction to proton translocation (for every two electrons transferred, four hydrogen ions are translocated across the cytoplasmic membrane), and thus conserves the redox energy in a proton gradient. The sequence is that of NADH-quinone oxidoreductase subunit I from Frankia casuarinae (strain DSM 45818 / CECT 9043 / HFP020203 / CcI3).